A 408-amino-acid chain; its full sequence is Aurora kinase A-B (408 aa).

A compositionally biased stretch (basic and acidic residues) spans 1–10; the sequence is MERAVKENHK. Residues 1–128 form a disordered region; that stretch reads MERAVKENHK…QGKTLAVPKE (128 aa). Positions 85 to 110 are enriched in polar residues; the sequence is GHQTSKPQGPNENRNPQQTSHSSTPN. The Protein kinase domain maps to 140–390; sequence FEIGRPLGKG…LKGVLEHPWI (251 aa). ATP is bound by residues K150, K169, and 217–220; that span reads LDYA. The active-site Proton acceptor is the D263. D281 serves as a coordination point for ATP. Residues 287–300 form an activation segment region; sequence HAPSSRRTTLCGTL.

Belongs to the protein kinase superfamily. Ser/Thr protein kinase family. Aurora subfamily. Interacts with kif2c and kif11. Phosphorylated. Autophosphorylated on a serine residue.

Its subcellular location is the cytoplasm. It localises to the cytoskeleton. The protein resides in the spindle pole. The protein localises to the microtubule organizing center. It is found in the centrosome. It catalyses the reaction L-seryl-[protein] + ATP = O-phospho-L-seryl-[protein] + ADP + H(+). The enzyme catalyses L-threonyl-[protein] + ATP = O-phospho-L-threonyl-[protein] + ADP + H(+). Its function is as follows. Mitotic serine/threonine kinases that contributes to the regulation of cell cycle progression. Associates with the centrosome and the spindle microtubules during mitosis and plays a critical role in various mitotic events including the establishment of mitotic spindle, centrosome duplication, centrosome separation as well as maturation, chromosomal alignment, spindle assembly checkpoint, and cytokinesis. Phosphorylates numerous target proteins. Important for microtubule formation and/or stabilization. The sequence is that of Aurora kinase A-B (aurka-b) from Xenopus laevis (African clawed frog).